We begin with the raw amino-acid sequence, 333 residues long: Oxidoreductase AN1596 (333 aa).

This sequence belongs to the NmrA-type oxidoreductase family.

It functions in the pathway secondary metabolite biosynthesis; terpenoid biosynthesis. Its function is as follows. Oxidoreductase; part of the gene cluster that mediates the biosynthesis of the diterpene ent-pimara-8(14),15-diene (PD). Within the cluster, the HMG-CoA reductase AN1593 functions in the mevalonate pathway, which produces isoprenoid precursors. The geranylgeranyl pyrophosphate (GGPP) synthase AN1592 is needed in the formation of GGPP, the precursor for diterpenes. Lastly, the pimaradiene synthase pbcA performs the 2 cyclization steps that convert GGPP to ent-pimara-8(14),15-diene. The putative roles of the remaining cluster enzymes in ent-pimara-8(14),15-diene biosynthesis is unclear. The cytochrome P450 monooxygenase AN1598, the glutathione S-transferase AN1595, the oxidoreductases AN1596 and AN1597 probably function as decorative enzymes. It is possible that in biological conditions the compound is oxidized to ent-pimara-8(14),15-dien-19-oic acid, which is a bioactive diterpene compound predominant in many plant extracts. This Emericella nidulans (strain FGSC A4 / ATCC 38163 / CBS 112.46 / NRRL 194 / M139) (Aspergillus nidulans) protein is Oxidoreductase AN1596.